Here is a 329-residue protein sequence, read N- to C-terminus: Malate dehydrogenase (329 aa).

An NAD(+)-binding site is contributed by 11 to 17 (GAAGQIA). Residues R92 and R98 each coordinate substrate. NAD(+) is bound by residues N105, Q112, and 129–131 (VGN). Positions 131 and 162 each coordinate substrate. The Proton acceptor role is filled by H187.

This sequence belongs to the LDH/MDH superfamily. MDH type 2 family.

The enzyme catalyses (S)-malate + NAD(+) = oxaloacetate + NADH + H(+). Catalyzes the reversible oxidation of malate to oxaloacetate. In Akkermansia muciniphila (strain ATCC BAA-835 / DSM 22959 / JCM 33894 / BCRC 81048 / CCUG 64013 / CIP 107961 / Muc), this protein is Malate dehydrogenase.